Consider the following 552-residue polypeptide: CTP synthase (552 aa).

The segment at 1-270 (MTKFVFVTGG…DGLICDKLRL (270 aa)) is amidoligase domain. A CTP-binding site is contributed by S13. UTP is bound at residue S13. ATP is bound by residues 14-19 (SLGKGI) and D71. Residues D71 and E144 each contribute to the Mg(2+) site. CTP-binding positions include 151-153 (DIE), 191-196 (KTKPTQ), and K227. UTP-binding positions include 191-196 (KTKPTQ) and K227. The 254-residue stretch at 295–548 (KIAMVGKYVE…VKAAIERQKA (254 aa)) folds into the Glutamine amidotransferase type-1 domain. An L-glutamine-binding site is contributed by G357. The Nucleophile; for glutamine hydrolysis role is filled by C384. L-glutamine contacts are provided by residues 385-388 (LGMQ), E408, and R474. Active-site residues include H521 and E523.

It belongs to the CTP synthase family. As to quaternary structure, homotetramer.

It catalyses the reaction UTP + L-glutamine + ATP + H2O = CTP + L-glutamate + ADP + phosphate + 2 H(+). The catalysed reaction is L-glutamine + H2O = L-glutamate + NH4(+). The enzyme catalyses UTP + NH4(+) + ATP = CTP + ADP + phosphate + 2 H(+). Its pathway is pyrimidine metabolism; CTP biosynthesis via de novo pathway; CTP from UDP: step 2/2. Allosterically activated by GTP, when glutamine is the substrate; GTP has no effect on the reaction when ammonia is the substrate. The allosteric effector GTP functions by stabilizing the protein conformation that binds the tetrahedral intermediate(s) formed during glutamine hydrolysis. Inhibited by the product CTP, via allosteric rather than competitive inhibition. Functionally, catalyzes the ATP-dependent amination of UTP to CTP with either L-glutamine or ammonia as the source of nitrogen. Regulates intracellular CTP levels through interactions with the four ribonucleotide triphosphates. This is CTP synthase from Delftia acidovorans (strain DSM 14801 / SPH-1).